The primary structure comprises 601 residues: Ubiquilin-4 (601 aa).

One can recognise a Ubiquitin-like domain in the interval 13 to 87 (IRVTVKTPKD…VHLVIKTPQK (75 aa)). Glycyl lysine isopeptide (Lys-Gly) (interchain with G-Cter in SUMO2) cross-links involve residues Lys23 and Lys62. The disordered stretch occupies residues 87 to 155 (KAQDPAAATA…GAGEGSPSAT (69 aa)). Low complexity predominate over residues 88 to 138 (AQDPAAATASSPSTPDPASAPSTTPASPATPAQPSTSGSASSDAGSGSRRS). A phosphoserine mark is found at Ser98 and Ser144. Gly residues predominate over residues 139 to 149 (SGGGPSPGAGE). 2 consecutive STI1 domains span residues 192–229 (NPEMLSQIMENPLVQDMMSNPDLMRHMIMANPQMQQLM) and 230–261 (ERNPEISHMLNNPELMRQTMELARNPAMMQEM). Thr287 carries the phosphothreonine modification. The segment at 301-366 (FGNNPFSSLA…QVHPTVSNPF (66 aa)) is disordered. Positions 307 to 318 (SSLAGNSDSSSS) are enriched in low complexity. At Ser318 the chain carries Phosphoserine; by ATM. Pro residues predominate over residues 329-340 (LPNPWSPSPPTS). The span at 344 to 354 (GSGGEGTGGSG) shows a compositional bias: gly residues. A compositionally biased stretch (polar residues) spans 357–366 (QVHPTVSNPF). STI1 domains lie at 393–440 (NPQL…QEQL) and 444–476 (LPVFLQQMQNPESLSILTNPRAMQALLQIQQGL). The disordered stretch occupies residues 490–533 (LGSFGISRTPAPSAGSNAGSTPEAPTSSPATPATSSPTGASSAQ). Low complexity predominate over residues 507-533 (AGSTPEAPTSSPATPATSSPTGASSAQ). In terms of domain architecture, UBA spans 553–598 (QTPEVRFQQQLEQLNSMGFINREANLQALIATGGDINAAIERLLGS).

As to quaternary structure, homooligomer. Binds signal sequences of proteins that are targeted to the endoplasmic reticulum. Interacts (via UBA domain) with GJA1 (not ubiquitinated) and with ubiquitin; both compete for the same binding site. Interacts (via UBA domain) with ubiquitin and with polyubiquitin chains. Interacts (via ubiquitin-like domain) with PSMD2 and PSMD4, regulatory subunits of the 26S proteasome. Interacts with ATXN1/SCA1; interaction with ATXN1 inhibits polyubiquitination of UBQLN4 and interferes with PSMD4 binding. Interacts with HERPUD1. Interacts (via ubiquitin-like domain) with UBQLN1 (via UBA domain). Interacts with UBQLN2. Interacts (via STI1 1 and 2 domains) with MAP1LC3A/B/C. Interacts with BAG6. Interacts with MRE11 (when ubiquitinated); interaction with ubiquitinated MRE11 leads to MRE11 removal from chromatin. Interacts with DESI1/POST; leading to nuclear export. Interacts with BCL2A1 and BCL2L10. (Microbial infection) Interacts with Mumps virus protein SH. Phosphorylated by ATM at Ser-318 in response to DNA damage, leading to localization in the nucleus and recruitment to sites of DNA damage. Post-translationally, ubiquitinated; this does not lead to proteasomal degradation. May undergo both 'Lys-48'- and 'Lys-63'-linked polyubiquitination. Highly expressed in pancreas, kidney, skeletal muscle, heart and throughout the brain, and at lower levels in placenta, lung and liver.

Its subcellular location is the nucleus. It localises to the cytoplasm. The protein localises to the chromosome. It is found in the endoplasmic reticulum. The protein resides in the perinuclear region. Its subcellular location is the cytoplasmic vesicle. It localises to the autophagosome. Functionally, regulator of protein degradation that mediates the proteasomal targeting of misfolded, mislocalized or accumulated proteins. Acts by binding polyubiquitin chains of target proteins via its UBA domain and by interacting with subunits of the proteasome via its ubiquitin-like domain. Key regulator of DNA repair that represses homologous recombination repair: in response to DNA damage, recruited to sites of DNA damage following phosphorylation by ATM and acts by binding and removing ubiquitinated MRE11 from damaged chromatin, leading to MRE11 degradation by the proteasome. MRE11 degradation prevents homologous recombination repair, redirecting double-strand break repair toward non-homologous end joining (NHEJ). Specifically recognizes and binds mislocalized transmembrane-containing proteins and targets them to proteasomal degradation. Collaborates with DESI1/POST in the export of ubiquitinated proteins from the nucleus to the cytoplasm. Also plays a role in the regulation of the proteasomal degradation of non-ubiquitinated GJA1. Acts as an adapter protein that recruits UBQLN1 to the autophagy machinery. Mediates the association of UBQLN1 with autophagosomes and the autophagy-related protein LC3 (MAP1LC3A/B/C) and may assist in the maturation of autophagosomes to autolysosomes by mediating autophagosome-lysosome fusion. In Homo sapiens (Human), this protein is Ubiquilin-4.